The sequence spans 611 residues: Alpha-1,2-mannosyltransferase ALG9 (611 aa).

Basic residues predominate over residues 1 to 10 (MASRRARQRL). A disordered region spans residues 1 to 51 (MASRRARQRLKGGGGGGGGGGDAGPAAEKLEQLGSREAGAEPRPESGNKAG). Over 1-135 (MASRRARQRL…FHARILQTNK (135 aa)) the chain is Lumenal. Gly residues predominate over residues 11-23 (KGGGGGGGGGGDA). N-linked (GlcNAc...) asparagine glycosylation occurs at asparagine 77. Residues 136–156 (ILVFYFLRCLLAFVSCVCELY) traverse the membrane as a helical segment. Residues 157–171 (FYKAVCKKFGLHVSR) lie on the Cytoplasmic side of the membrane. The chain crosses the membrane as a helical span at residues 172–192 (MMLAFLVLSTGMFCSSSAFLP). The Lumenal portion of the chain corresponds to 193-213 (SSFCMYTTLIAMTGWYMDKTP). Residues 214–234 (IAVLGVAAGAILGWPFSAALG) form a helical membrane-spanning segment. The Cytoplasmic portion of the chain corresponds to 235–249 (LPIAFDLLARKHRWK). A helical transmembrane segment spans residues 250–270 (SFLLWSLVALALFLVPVVVID). Over 271–310 (SYYYGKLVVAPLNIVLYNVFTSHGPDLYGTEPWYFYLING) the chain is Lumenal. A helical membrane pass occupies residues 311–331 (FLNFNVAFALALLVLPLTFLM). The Cytoplasmic portion of the chain corresponds to 332-342 (EYLLQRFHVQN). Residues 343–363 (LGHPYWLTLAPMYIWFIIFFI) form a helical membrane-spanning segment. Residues 364 to 370 (QPHKEER) are Lumenal-facing. A helical membrane pass occupies residues 371–391 (FLFPVYPLICLCGAVALSALQ). At 392–405 (KCYHFVFQRYRLEH) the chain is on the cytoplasmic side. Residues 406 to 426 (YTVTSNWLALGTVFLFGLLSF) form a helical membrane-spanning segment. Residues 427–611 (SRSVALFRGY…AKPSRKKSGG (185 aa)) lie on the Lumenal side of the membrane. N-linked (GlcNAc...) asparagine glycans are attached at residues asparagine 550 and asparagine 593.

The protein belongs to the glycosyltransferase 22 family.

Its subcellular location is the endoplasmic reticulum membrane. It carries out the reaction an alpha-D-Man-(1-&gt;2)-alpha-D-Man-(1-&gt;2)-alpha-D-Man-(1-&gt;3)-[alpha-D-Man-(1-&gt;3)-alpha-D-Man-(1-&gt;6)]-beta-D-Man-(1-&gt;4)-beta-D-GlcNAc-(1-&gt;4)-alpha-D-GlcNAc-diphospho-di-trans,poly-cis-dolichol + a di-trans,poly-cis-dolichyl beta-D-mannosyl phosphate = an alpha-D-Man-(1-&gt;2)-alpha-D-Man-(1-&gt;2)-alpha-D-Man-(1-&gt;3)-[alpha-D-Man-(1-&gt;2)-alpha-D-Man-(1-&gt;3)-alpha-D-Man-(1-&gt;6)]-beta-D-Man-(1-&gt;4)-beta-D-GlcNAc-(1-&gt;4)-alpha-D-GlcNAc-diphospho-di-trans,poly-cis-dolichol + a di-trans,poly-cis-dolichyl phosphate + H(+). It catalyses the reaction an alpha-D-Man-(1-&gt;2)-alpha-D-Man-(1-&gt;2)-alpha-D-Man-(1-&gt;3)-[alpha-D-Man-(1-&gt;2)-alpha-D-Man-(1-&gt;3)-[alpha-D-Man-(1-&gt;6)]-alpha-D-Man-(1-&gt;6)]-beta-D-Man-(1-&gt;4)-beta-D-GlcNAc-(1-&gt;4)-alpha-D-GlcNAc-diphospho-di-trans,poly-cis-dolichol + a di-trans,poly-cis-dolichyl beta-D-mannosyl phosphate = an alpha-D-Man-(1-&gt;2)-alpha-D-Man-(1-&gt;2)-alpha-D-Man-(1-&gt;3)-[alpha-D-Man-(1-&gt;2)-alpha-D-Man-(1-&gt;3)-[alpha-D-Man-(1-&gt;2)-alpha-D-Man-(1-&gt;6)]-alpha-D-Man-(1-&gt;6)]-beta-D-Man-(1-&gt;4)-beta-D-GlcNAc-(1-&gt;4)-alpha-D-GlcNAc-diphospho-di-trans,poly-cis-dolichol + a di-trans,poly-cis-dolichyl phosphate + H(+). Its pathway is protein modification; protein glycosylation. Functionally, mannosyltransferase that operates in the biosynthetic pathway of dolichol-linked oligosaccharides, the glycan precursors employed in protein asparagine (N)-glycosylation. The assembly of dolichol-linked oligosaccharides begins on the cytosolic side of the endoplasmic reticulum membrane and finishes in its lumen. The sequential addition of sugars to dolichol pyrophosphate produces dolichol-linked oligosaccharides containing fourteen sugars, including two GlcNAcs, nine mannoses and three glucoses. Once assembled, the oligosaccharide is transferred from the lipid to nascent proteins by oligosaccharyltransferases. In the lumen of the endoplasmic reticulum, catalyzes the addition of the seventh and ninth alpha-1,2-linked mannose residues to Man(6)GlcNAc(2)-PP-dolichol and Man(8)GlcNAc(2)-PP-dolichol respectively. In Mus musculus (Mouse), this protein is Alpha-1,2-mannosyltransferase ALG9.